Here is a 720-residue protein sequence, read N- to C-terminus: Phosphate acetyltransferase (720 aa).

The phosphate acetyltransferase stretch occupies residues 389-720 (AFRHELVQKS…LEAKAAALAS (332 aa)).

It in the N-terminal section; belongs to the CobB/CobQ family. This sequence in the C-terminal section; belongs to the phosphate acetyltransferase and butyryltransferase family. In terms of assembly, homohexamer.

It localises to the cytoplasm. It carries out the reaction acetyl-CoA + phosphate = acetyl phosphate + CoA. Its pathway is metabolic intermediate biosynthesis; acetyl-CoA biosynthesis; acetyl-CoA from acetate: step 2/2. In terms of biological role, involved in acetate metabolism. The chain is Phosphate acetyltransferase (pta) from Acinetobacter baylyi (strain ATCC 33305 / BD413 / ADP1).